The primary structure comprises 493 residues: Monodehydroascorbate reductase, chloroplastic/mitochondrial (493 aa).

Residues 1-51 (MSAVRRVMALASTTLPTKSGLSLWCPSSPSLARRFPARFSPIGSRIASRSL) constitute a chloroplast and mitochondrion transit peptide. FAD-binding positions include 68–71 (GGNA), glutamate 95, arginine 102, lysine 107, and 201–202 (RE). NAD(+) contacts are provided by residues 224 to 230 (GGYIGME), glutamate 248, arginine 254, and glycine 313. NADP(+) is bound at residue 226 to 230 (YIGME). Arginine 254 and glycine 313 together coordinate NADP(+). Aspartate 351 contributes to the FAD binding site. 367 to 368 (EH) contributes to the NAD(+) binding site. 367 to 368 (EH) lines the NADP(+) pocket. Valine 369 is a binding site for FAD. Residue arginine 373 coordinates L-ascorbate. Tyrosine 398 contacts FAD. Tyrosine 398 provides a ligand contact to NAD(+). Tyrosine 398 contributes to the NADP(+) binding site. Arginine 400 is a binding site for L-ascorbate.

It belongs to the FAD-dependent oxidoreductase family. As to quaternary structure, interacts in vitro with TRXy. The cofactor is FAD.

The protein localises to the plastid. It is found in the chloroplast. It localises to the mitochondrion. The catalysed reaction is 2 monodehydro-L-ascorbate radical + NADH + H(+) = 2 L-ascorbate + NAD(+). The enzyme catalyses 2,4,6-trinitrotoluene + NADH = 2,4,6-trinitrotoluene radical + e(-) + NAD(+). With respect to regulation, redox regulation of the activity by thioredoxin TRXy1. Functionally, catalyzes the conversion of monodehydroascorbate (MDA) to ascorbate, oxidizing NADH in the process. Mediates phytotoxicity of 2,4,6-trinitrotoluene (TNT), an explosive and environmental pollutant, by reducing TNT and forming a nitro radical that spontaneously reacts with atmospheric oxygen, generating reactive superoxide. Can also use 1-chloro-2,4-dinitrobenzene (CDNB) as substrate, but not 1-chloro-4-nitrobenzene (CNB). This Arabidopsis thaliana (Mouse-ear cress) protein is Monodehydroascorbate reductase, chloroplastic/mitochondrial.